The sequence spans 198 residues: Guanylyl cyclase-activating protein 2 (198 aa).

Gly-2 is lipidated: N-myristoyl glycine. 4 consecutive EF-hand domains span residues 16-51, 52-87, 88-123, and 139-174; these read DVAE…QDNH, EAAE…VLRG, KLEH…IYKL, and TPEE…DKWV. The Ca(2+) site is built by Asp-65, Asn-67, Asp-69, Thr-71, Glu-76, Asp-101, Asp-103, Asn-105, Cys-107, Glu-112, Asp-152, Asn-154, Asp-156, Gln-158, and Glu-163.

Undergoes dimerization at low calcium ions concentration, while the presence of calcium ions inhibits its dimerization. Dimerization correlates with its ability to activate GC. Retina and pineal gland.

In terms of biological role, stimulates synthesis of cGMP in photoreceptors. Thought to mediate Ca(2+)-sensitive regulation of retinal guanylyl cyclase (GC), a key event in recovery of the dark state of rod photoreceptors following light exposure. The polypeptide is Guanylyl cyclase-activating protein 2 (GUCA1B) (Gallus gallus (Chicken)).